Here is a 430-residue protein sequence, read N- to C-terminus: Glutamate-1-semialdehyde 2,1-aminomutase (430 aa).

At Lys-265 the chain carries N6-(pyridoxal phosphate)lysine.

The protein belongs to the class-III pyridoxal-phosphate-dependent aminotransferase family. HemL subfamily. In terms of assembly, homodimer. The cofactor is pyridoxal 5'-phosphate.

Its subcellular location is the cytoplasm. The enzyme catalyses (S)-4-amino-5-oxopentanoate = 5-aminolevulinate. The protein operates within porphyrin-containing compound metabolism; protoporphyrin-IX biosynthesis; 5-aminolevulinate from L-glutamyl-tRNA(Glu): step 2/2. The polypeptide is Glutamate-1-semialdehyde 2,1-aminomutase (Helicobacter pylori (strain Shi470)).